Reading from the N-terminus, the 689-residue chain is Zinc finger protein 185 (689 aa).

Disordered regions lie at residues 1–253 (MSIS…GRTK) and 298–534 (APDV…SCTS). Residues 35 to 52 (LKGDKSWITKQDESEGRT) are compositionally biased toward basic and acidic residues. Ser-66 carries the post-translational modification Phosphoserine. Polar residues predominate over residues 95–114 (IDSSSQPQQQFPKANGTPKS). Ser-153 is subject to Phosphoserine. The segment covering 157 to 166 (DTEEEEEEEV) has biased composition (acidic residues). Pro-206 bears the Phosphoserine mark. Composition is skewed to basic and acidic residues over residues 217–232 (KRVE…EKSQ) and 310–331 (NKDK…EEAF). Positions 338–349 (AARSSAQLSDGN) are enriched in polar residues. Composition is skewed to low complexity over residues 373–382 (SSSATSVSAV) and 434–444 (DPAVPAQQPAD). Position 447 is a phosphothreonine (Thr-447). Residues 448–458 (PERQSSPSGSE) are compositionally biased toward polar residues. Phosphoserine is present on residues Ser-453 and Ser-465. Over residues 504 to 524 (PTQQPADPSTPEQQNSPSGSE) the composition is skewed to polar residues. The region spanning 627–689 (GICTYCNREI…HCGKCYEKLF (63 aa)) is the LIM zinc-binding domain.

As to expression, expressed in placenta, pancreas and kidney. Also expressed in prostate, testis, ovary and blood.

The protein resides in the cytoplasm. The protein localises to the cytoskeleton. It is found in the cell junction. Its subcellular location is the focal adhesion. Its function is as follows. May be involved in the regulation of cellular proliferation and/or differentiation. The polypeptide is Zinc finger protein 185 (ZNF185) (Homo sapiens (Human)).